The primary structure comprises 361 residues: Thymidine kinase (361 aa).

17-24 (GPHGVGKS) serves as a coordination point for ATP. The active-site Proton acceptor is E46. Positions 64 and 88 each coordinate substrate. Residue R184 participates in ATP binding. Substrate is bound at residue R190.

The protein belongs to the herpesviridae thymidine kinase family. In terms of assembly, homodimer.

The enzyme catalyses thymidine + ATP = dTMP + ADP + H(+). Functionally, catalyzes the transfer of the gamma-phospho group of ATP to thymidine to generate dTMP in the salvage pathway of pyrimidine synthesis. The dTMP serves as a substrate for DNA polymerase during viral DNA replication. Allows the virus to be reactivated and to grow in non-proliferative cells lacking a high concentration of phosphorylated nucleic acid precursors. This is Thymidine kinase from Saimiriine herpesvirus 1 (strain MV-5-4-PSL) (SaHV-1).